A 761-amino-acid chain; its full sequence is Zinc finger protein 287 (761 aa).

The SCAN box domain occupies 49–131 (RQNFRNFPYP…TLVEDLTQIL (83 aa)). The segment at 134–154 (EAPQNSTLSQDTPEEDPRGKH) is disordered. Positions 170–238 (MTFKDVAVDI…IKEILEGPSP (69 aa)) constitute a KRAB domain. 14 consecutive C2H2-type zinc fingers follow at residues 368–390 (YKCN…QSTH), 396–418 (YECE…QRMH), 424–446 (YECH…QRIH), 452–474 (YKCD…QRTH), 480–502 (YKCL…QRVH), 508–530 (YICN…QKIH), 536–558 (YKCN…QRIH), 564–586 (YKCN…QTTH), 592–614 (YICN…HRTH), 620–642 (YKCS…QRIH), 648–670 (FKCN…QRIH), 676–698 (YKCN…QRTH), 704–726 (YKCN…QRIH), and 732–754 (YACR…QRVH).

Belongs to the krueppel C2H2-type zinc-finger protein family.

The protein localises to the nucleus. Its function is as follows. May be involved in transcriptional regulation. In Pongo pygmaeus (Bornean orangutan), this protein is Zinc finger protein 287.